A 481-amino-acid polypeptide reads, in one-letter code: UDP-glycosyltransferase 85C2 (481 aa).

His23 (proton acceptor) is an active-site residue. His23 is a binding site for an anthocyanidin. The active-site Charge relay is Asp120. Positions 143, 362, 377, 380, 382, 385, 401, and 402 each coordinate UDP-alpha-D-glucose.

The protein belongs to the UDP-glycosyltransferase family.

It carries out the reaction steviol + UDP-alpha-D-glucose = steviolmonoside + UDP + H(+). It catalyses the reaction steviolmonoside + UDP-alpha-D-glucose = rubusoside + UDP. Its function is as follows. Involved in the biosynthesis of steviol glycosides in leaves. Converts steviol to the mono-glycoside steviolmonoside. Converts the mono-glycoside steviolmonoside to the bi-glycoside rubusoside. In Stevia rebaudiana (Stevia), this protein is UDP-glycosyltransferase 85C2.